Reading from the N-terminus, the 187-residue chain is MSAFFLNMKKSIITQKIIAKAFKDLMQSNAYHQISVSDIMQTAKIRRQTFYNYFQNQEELLSWIFENDFAELINDNSDYYGWQNELLLLLRYLDENQIFYQKIFVIDKNFEHFFLIQWENLLDKVIFDQEKKSDYHWSDLEKSFICRYNAAAICAITRESIIRGNSLEKLYSQIVNLLLAQIKIFES.

Positions 12 to 72 (IITQKIIAKA…WIFENDFAEL (61 aa)) constitute an HTH tetR-type domain. The H-T-H motif DNA-binding region spans 35 to 54 (SVSDIMQTAKIRRQTFYNYF).

Homodimer. Interacts with a homodimer of DhaQ.

Its function is as follows. In complex with DhaQ, upon activation by dihydroxyacetone, activates transcription of the dhaKLM operon. Binds the inverted repeat sequence 5'-GGACACATN(6)ATTTGTCC-3' located upstream of and partially overlapping with the -35 promoter sequence of the dhaKLM operon promoter. This chain is HTH-type dhaKLM operon transcriptional activator DhaS (dhaS), found in Lactococcus lactis subsp. lactis (strain IL1403) (Streptococcus lactis).